Here is a 625-residue protein sequence, read N- to C-terminus: MTQYFEIENRDGAARIGKLLLFPEIRTPCALHTAALGDLENPGPIVDAGSLWIADQKELEARIKEIREKTGKGTLIILPHQTYPPAVPAESTGKVEAFTATGDENAEAEGPTGSLLRAEGEVRKSDLYIMEGAGTLENNARRFLETLIDLKNRIPPDTALYAPKLALPENAAMLAYVGIDVMDDTRAEIAAYSDIYLTAAGSFYLDSLVEFPCRCRVCAATTPAELRALPKADRVELLSAHNRDALDAELALVREKIRTGNLREYVEGQCRVRPWLTALLRLGDFEYSYIEEKVPAFRQSQLLADTSEALSRIEVVRFARRIQERYAPPDLDVLLLLPCAARKPYSTSQSHQKFILALGKYRKFVHEVIITSPLGIVPRELELTYPAAHYDTAVTGHWDEEEKAWVSGCLESYLSKHMYKAVVAHVEGAYREICERVAEKLGIDVVYTAGESLASYESLTNLKNTVEAICTSKDFSRKSQNAEKEKKNFIKAVAGYQFGEGAGHLFSEEVGDPLVKGRFPKYQLFAGKKQLATLIPQYGMLALSPEGAELVLKSEKYVVKIDDFVPRGSILAPGVLDAGPEIRPNDEVIVLGKKALCVGRAMMSGREMKESGRGVAVDVRHVKKL.

The PUA domain occupies 556–624 (KYVVKIDDFV…VAVDVRHVKK (69 aa)).

It belongs to the archaeosine synthase type 1 family. In terms of assembly, forms a robust complex with the archaeosine synthase beta subunit RaSEA. Formation of this complex highly increases lysine transfer activity. The complex likely consists of an alpha(2)beta(2) heterotetrameric structure.

The enzyme catalyses 7-cyano-7-carbaguanosine(15) in tRNA + L-lysine = 7-N-[(5S)-5-amino-5-carboxypentyl]formamidino-7-deazaguanosine(15) in tRNA. It functions in the pathway tRNA modification; archaeosine-tRNA biosynthesis. Functions in the biosynthesis of archaeosine, a modified nucleoside present in the dihydrouridine loop (D-loop) of archaeal tRNAs. Catalyzes the addition of L-lysine to the cyano group of 7-cyano-7-deazaguanine (preQ0)-modified tRNAs at position 15, to generate q0kN15-tRNA, a q0N lysine adduct identified as 7-N-[(5S)-5-amino-5-carboxypentyl]formamidino-7-deazaguanosine. The protein is Archaeosine synthase subunit alpha of Methanosarcina acetivorans (strain ATCC 35395 / DSM 2834 / JCM 12185 / C2A).